A 713-amino-acid polypeptide reads, in one-letter code: Subtilisin-like protease SBT4.9 (713 aa).

Positions 1 to 24 (MARRADSFCLISCVLVSFVISVSA) are cleaved as a signal peptide. A propeptide spans 25–113 (VTDDSQDKQV…VFPDINYKLQ (89 aa)) (activation peptide). The 79-residue stretch at 34 to 112 (VYVVYMGSLP…SVFPDINYKL (79 aa)) folds into the Inhibitor I9 domain. Positions 117–560 (SWDFLGLKEG…AGHVDPIAAI (444 aa)) constitute a Peptidase S8 domain. The active-site Charge relay system is D145. Residue N176 is glycosylated (N-linked (GlcNAc...) asparagine). H200 serves as the catalytic Charge relay system. N215 and N223 each carry an N-linked (GlcNAc...) asparagine glycan. The PA domain maps to 356–415 (NYPLYGGSTDGPLLRGKILVSEDKVSSEIVVANINENYHDYAYVSILPSSALSKDDFDSV). An N-linked (GlcNAc...) asparagine glycan is attached at N420. S499 acts as the Charge relay system in catalysis. N-linked (GlcNAc...) asparagine glycans are attached at residues N536, N583, N627, and N637.

It belongs to the peptidase S8 family. Post-translationally, the C-terminal propeptide is autocleaved.

The protein localises to the secreted. The chain is Subtilisin-like protease SBT4.9 from Arabidopsis thaliana (Mouse-ear cress).